The following is a 1240-amino-acid chain: RNA-directed RNA polymerase VP2 (1240 aa).

The 249-residue stretch at 516–764 (LVANYINKHM…KLYALFGARI (249 aa)) folds into the RdRp catalytic domain.

This sequence belongs to the reoviridae RNA-directed RNA polymerase family.

The protein resides in the virion. It carries out the reaction RNA(n) + a ribonucleoside 5'-triphosphate = RNA(n+1) + diphosphate. Its function is as follows. RNA-directed RNA polymerase that is involved in transcription and genome replication. Following infection, it catalyzes the synthesis of fully conservative plus strands. After core assembly, which consists in recruitment of one capped plus-strand for each genomic segments and polymerase complexes, the polymerase switches mode and catalyzes the synthesis of complementary minus-strands. The sequence is that of RNA-directed RNA polymerase VP2 (S2) from Oncorhynchus keta (Chum salmon).